The sequence spans 254 residues: 14-3-3-like protein GF14 epsilon (254 aa).

Phosphoserine occurs at positions 65 and 188.

This sequence belongs to the 14-3-3 family. In terms of assembly, interacts with DREB1A and DREB1B in the nucleus. Interacts with CINV1.

It localises to the nucleus. The protein localises to the cytoplasm. Functionally, is associated with a DNA binding complex that binds to the G box, a well-characterized cis-acting DNA regulatory element found in plant genes. The polypeptide is 14-3-3-like protein GF14 epsilon (GRF10) (Arabidopsis thaliana (Mouse-ear cress)).